The sequence spans 339 residues: Ketol-acid reductoisomerase (NADP(+)) (339 aa).

A KARI N-terminal Rossmann domain is found at 1–182 (MRVYYDRDAD…GGGRSGIIET (182 aa)). NADP(+)-binding positions include 24-27 (YGSQ), K48, S51, T53, and 83-86 (DELQ). The active site involves H108. G134 serves as a coordination point for NADP(+). The region spanning 183–328 (NFKEECETDL…AKLRGMMPWI (146 aa)) is the KARI C-terminal knotted domain. 4 residues coordinate Mg(2+): D191, E195, E227, and E231. S252 contacts substrate.

It belongs to the ketol-acid reductoisomerase family. It depends on Mg(2+) as a cofactor.

It carries out the reaction (2R)-2,3-dihydroxy-3-methylbutanoate + NADP(+) = (2S)-2-acetolactate + NADPH + H(+). The catalysed reaction is (2R,3R)-2,3-dihydroxy-3-methylpentanoate + NADP(+) = (S)-2-ethyl-2-hydroxy-3-oxobutanoate + NADPH + H(+). It functions in the pathway amino-acid biosynthesis; L-isoleucine biosynthesis; L-isoleucine from 2-oxobutanoate: step 2/4. It participates in amino-acid biosynthesis; L-valine biosynthesis; L-valine from pyruvate: step 2/4. Its function is as follows. Involved in the biosynthesis of branched-chain amino acids (BCAA). Catalyzes an alkyl-migration followed by a ketol-acid reduction of (S)-2-acetolactate (S2AL) to yield (R)-2,3-dihydroxy-isovalerate. In the isomerase reaction, S2AL is rearranged via a Mg-dependent methyl migration to produce 3-hydroxy-3-methyl-2-ketobutyrate (HMKB). In the reductase reaction, this 2-ketoacid undergoes a metal-dependent reduction by NADPH to yield (R)-2,3-dihydroxy-isovalerate. The chain is Ketol-acid reductoisomerase (NADP(+)) from Agrobacterium fabrum (strain C58 / ATCC 33970) (Agrobacterium tumefaciens (strain C58)).